Reading from the N-terminus, the 1211-residue chain is MNIGIAAPKWDKLSPREFLQLQELASYSTRKLQDVLREFSSPSAASTPKCIPDGDIDFDGFRRFLDAFLDCEAPLDLAKHLFVSFLKPNVTQAQLHGRALNQMAAISSTAACAPVTSHTKGSIPNINSIAELMPQCSGGGGGIGGTGGVAGAEGHAQARSSFVDKIHGITDKLHHSLGGHLSHDPSKTGSVHPMLTVTPSPLASGPSMFQASNPARRSVDSSPSHSATNHSQMSRNSSKKSSNSVNCKIDADIKLLARKLSHFDPLTLKVPLKDVVCYLSLLEAGRPEDKLEFMFRLYDTDSNGVLDTAEMDAIVNQMMAVAEYLGWDVSELRPILQEMMVEIDYDADGTVSLDEWQRGGMTTIPLLVLLGVDSTTLKEDGIHVWRLKHFSKPAYCNLCLNMLVGLGKKGLCCVLCKYTVHERCVQHAPASCITTYVKSKKPKCGGDLLHHWVEGNCYGRCSKCRKRIKAYHGITGLTCRWCHMMLHNRCASSVKKECTLGEYSELIVPPTAICPAVLDRQRSVNQAHKKSQMHHHQATHFQITPPDELSCPLLVFVNPKSGGRQGDRILRKFQYMLNPRQVYDLSKGGPKEGLTLFKDLPRFRVICCGGDGTVGWVLEAMDSIELASQPAIGVIPLGTGNDLARCLRWGGGYEGENIPKLMDKFRRASTVMLDRWSIEVTNTPHSDDMRPKVTLHSNMQKVIELSQSVVVDKSLMERFEEIQRQSKQVATSMGTAASSTSIMMASKTETEMETMATMEFGSSTTTTNRTTTTKSISMSTFETQCLQQTLRTAMSSSSSNTSSGSPCNGNQDAETEVDSHAAAAADVREKSVPRRSGETEKQSLETLLLQHKQQMQQQQQQQQQGVTSLAVEEAATATPVGSNQSDNSSQRNKQNNILKQQITLSLDLSDHEDEPKDDGGGAGDGTKSNGNSIPATPATPITPTTPNAASSVLQQQQQQHLQFEQQQKPIKVQSDKDCTVPYNIINNYFSVGVDAAICVKFHLEREKNPHKFNSRMKNKLWYFEYATSETFAASCKNLHESIEIVCDGVALDLANGPHLQGVALLNIPYTHGGSNLWGEHLSQKRIRKSAGPFGKSKKLRAGDKEFSATSFNSVDLSVAIQDFGDRLIEVIGLENCLHMGQVRTGLRASGRRLAQCSEVIIKTKKTFPMQIDGEPWMQMPCTIKVTHKNQVPMLMAPRSEKGRGFFNLLCS.

The segment at 174 to 244 (HHSLGGHLSH…RNSSKKSSNS (71 aa)) is disordered. Polar residues predominate over residues 197–230 (VTPSPLASGPSMFQASNPARRSVDSSPSHSATNH). The segment covering 231–244 (SQMSRNSSKKSSNS) has biased composition (low complexity). EF-hand domains are found at residues 286–321 (RPED…MMAV) and 331–366 (ELRP…TIPL). The Ca(2+) site is built by aspartate 299, aspartate 301, asparagine 303, glutamate 310, aspartate 344, aspartate 346, aspartate 348, threonine 350, and glutamate 355. 2 Phorbol-ester/DAG-type zinc fingers span residues 382 to 432 (IHVW…PASC) and 449 to 498 (LHHW…KKEC). Positions 548-682 (ELSCPLLVFV…LDRWSIEVTN (135 aa)) constitute a DAGKc domain. Disordered regions lie at residues 789-841 (TLRT…ETEK), 874-893 (AATA…QRNK), and 910-958 (DHED…QQQQ). A compositionally biased stretch (low complexity) spans 795-805 (SSSSSNTSSGS). Over residues 826–841 (DVREKSVPRRSGETEK) the composition is skewed to basic and acidic residues. Residues 879-893 (PVGSNQSDNSSQRNK) are compositionally biased toward polar residues. Residues 931-958 (NSIPATPATPITPTTPNAASSVLQQQQQ) show a composition bias toward low complexity.

This sequence belongs to the eukaryotic diacylglycerol kinase family. In terms of tissue distribution, in 10-11 hours embryos, expression is abundant in a limited number of cells in the procephalic region and in the ventral nerve cord. Predominantly expressed in the adult nervous system and muscle: including compound eyes, brain cortex, fibrillar muscle, and tubular muscle.

The catalysed reaction is a 1,2-diacyl-sn-glycerol + ATP = a 1,2-diacyl-sn-glycero-3-phosphate + ADP + H(+). In terms of biological role, upon cell stimulation converts the second messenger diacylglycerol into phosphatidate, initiating the resynthesis of phosphatidylinositols and attenuating protein kinase C activity. May have a role in the development of the embryonic nervous system and the function of the adult nervous system and muscle; regulating signal transduction in neurons. This chain is Diacylglycerol kinase 1 (Dgk), found in Drosophila melanogaster (Fruit fly).